The primary structure comprises 693 residues: MTAIKKSFQYGQHTVTFETGEIARQASGAVLVNMADTVVLVTAVGLKDVAQGRDFFPLTVNYQERTYAAGRIPGGFFKREGRPTEKETLTSRLIDRPIRPLFPKGFMNEVQVIATVMSMNPEVDPDVPAMLGASAALALSGLPFKGPIGAARVGYLNGAYVLNPSMSELKHSDLDLVVAGTEKAVLMVESEAKLLSEEVMLGAVMYGHEQMQAAIKVINELAAEAGKPAWDWVAPEENVALKEAVAAACEAELTAAYQIAEKQARNQQVNALRDAVVAKLATGEEGAPSAEKVKGAFGALEKRIVRSRVLKGEPRIDGRDTRTVRPITVKTGVLPRTHGSALFTRGETQAIVVATLGTDRDAQLIEAIEGERRERFMLHYNFPPFCTGETGMVGSPKRREIGHGRLAKRGVQAVMPGEAECPYVLRVVSEITESNGSSSMASVCGTSLALMDAGVPLKAPVAGIAMGLIKEGDAFAVISDILGDEDHLGDMDFKVAGSKDGVSALQMDIKIDGITREIMEKALAQAKEGRLHILEKMNAVLSEPRTEVSAYAPRFTTLKIHPDKIRDVIGKGGATIRALTEETGTSIDISDDGTVKIASVDKAAGDEARRRIEELTADVEVGRIYEGRVVKIMDFGAFVTILPGRDGLVHISQISEERVESVSDRLTEGDLVKVKVLEVDKQGRIRLSMKEVG.

Mg(2+)-binding residues include Asp486 and Asp492. The region spanning 553–612 (PRFTTLKIHPDKIRDVIGKGGATIRALTEETGTSIDISDDGTVKIASVDKAAGDEARRRI) is the KH domain. In terms of domain architecture, S1 motif spans 622 to 690 (GRIYEGRVVK…KQGRIRLSMK (69 aa)).

Belongs to the polyribonucleotide nucleotidyltransferase family. Component of the RNA degradosome, which is a multiprotein complex involved in RNA processing and mRNA degradation. Requires Mg(2+) as cofactor.

The protein resides in the cytoplasm. It catalyses the reaction RNA(n+1) + phosphate = RNA(n) + a ribonucleoside 5'-diphosphate. Its function is as follows. Involved in mRNA degradation. Catalyzes the phosphorolysis of single-stranded polyribonucleotides processively in the 3'- to 5'-direction. In Thioalkalivibrio sulfidiphilus (strain HL-EbGR7), this protein is Polyribonucleotide nucleotidyltransferase.